Consider the following 557-residue polypeptide: 2-isopropylmalate synthase (557 aa).

A Pyruvate carboxyltransferase domain is found at 33–307 (PIWCSSDLRD…DPQLDFSDID (275 aa)). Mg(2+)-binding residues include Asp42, His246, His248, and Asn282. A regulatory domain region spans residues 439–557 (ANAPYALVSH…SLSQQQAKAA (119 aa)).

Belongs to the alpha-IPM synthase/homocitrate synthase family. LeuA type 2 subfamily. In terms of assembly, homodimer. The cofactor is Mg(2+).

Its subcellular location is the cytoplasm. It carries out the reaction 3-methyl-2-oxobutanoate + acetyl-CoA + H2O = (2S)-2-isopropylmalate + CoA + H(+). Its pathway is amino-acid biosynthesis; L-leucine biosynthesis; L-leucine from 3-methyl-2-oxobutanoate: step 1/4. Its function is as follows. Catalyzes the condensation of the acetyl group of acetyl-CoA with 3-methyl-2-oxobutanoate (2-ketoisovalerate) to form 3-carboxy-3-hydroxy-4-methylpentanoate (2-isopropylmalate). The chain is 2-isopropylmalate synthase from Pseudomonas entomophila (strain L48).